A 706-amino-acid polypeptide reads, in one-letter code: Probable protein S-acyltransferase 20 (706 aa).

2 consecutive transmembrane segments (helical) span residues 16-36 (VIAITVFCLLVVAFYAFFAPF) and 41-61 (IWEYVLIGVYSPVAILVFVLY). Residues 172 to 222 (LFCTLCNCEVRKFSKHCRSCDKCVDCFDHHCKWLNNCVGRKNYVTFVSLMS) form the DHHC domain. The S-palmitoyl cysteine intermediate role is filled by cysteine 202. 2 helical membrane-spanning segments follow: residues 220–240 (LMSASLLWLIIEAAVGIAVIV) and 275–295 (AVAIFACFPLGELLFFHMLLI). Disordered stretches follow at residues 470-505 (SSLSRNSFAPSQGSRDEYDTGSHGMSNLSSPSHVHE), 591-621 (LNPSSQTASTQNPRPILPAHDSSSGSSALRD), and 680-706 (RDSTSNQLPVFAPGGLGANSQTGSNIK). Polar residues-rich tracts occupy residues 492–501 (HGMSNLSSPS), 591–603 (LNPSSQTASTQNP), and 697–706 (ANSQTGSNIK).

This sequence belongs to the DHHC palmitoyltransferase family.

The protein localises to the cell membrane. Its subcellular location is the cytoplasmic vesicle membrane. It catalyses the reaction L-cysteinyl-[protein] + hexadecanoyl-CoA = S-hexadecanoyl-L-cysteinyl-[protein] + CoA. Palmitoyl acyltransferase. The sequence is that of Probable protein S-acyltransferase 20 (PAT20) from Arabidopsis thaliana (Mouse-ear cress).